A 199-amino-acid polypeptide reads, in one-letter code: FMN-dependent NADH:quinone oxidoreductase 4 (199 aa).

FMN contacts are provided by residues Ser10, Met95–Leu98, and Ser139–Gly142.

Belongs to the azoreductase type 1 family. As to quaternary structure, homodimer. FMN serves as cofactor.

It catalyses the reaction 2 a quinone + NADH + H(+) = 2 a 1,4-benzosemiquinone + NAD(+). The enzyme catalyses N,N-dimethyl-1,4-phenylenediamine + anthranilate + 2 NAD(+) = 2-(4-dimethylaminophenyl)diazenylbenzoate + 2 NADH + 2 H(+). In terms of biological role, quinone reductase that provides resistance to thiol-specific stress caused by electrophilic quinones. Its function is as follows. Also exhibits azoreductase activity. Catalyzes the reductive cleavage of the azo bond in aromatic azo compounds to the corresponding amines. This chain is FMN-dependent NADH:quinone oxidoreductase 4, found in Burkholderia lata (strain ATCC 17760 / DSM 23089 / LMG 22485 / NCIMB 9086 / R18194 / 383).